Consider the following 340-residue polypeptide: Eukaryotic translation initiation factor 3 subunit I (340 aa).

WD repeat units lie at residues 8–47 (GHER…RLGT), 50–89 (GHQG…CVKV), 91–135 (DFPT…GEGN), 150–189 (CEQS…QLQN), 194–233 (EFDY…VMKT), and 291–330 (GHFG…FDFM).

It belongs to the eIF-3 subunit I family. In terms of assembly, component of the eukaryotic translation initiation factor 3 (eIF-3) complex.

The protein resides in the cytoplasm. Component of the eukaryotic translation initiation factor 3 (eIF-3) complex, which is involved in protein synthesis of a specialized repertoire of mRNAs and, together with other initiation factors, stimulates binding of mRNA and methionyl-tRNAi to the 40S ribosome. The eIF-3 complex specifically targets and initiates translation of a subset of mRNAs involved in cell proliferation. The polypeptide is Eukaryotic translation initiation factor 3 subunit I (Coccidioides immitis (strain RS) (Valley fever fungus)).